The following is a 462-amino-acid chain: NEDD8-activating enzyme E1 catalytic subunit (462 aa).

N-acetylalanine is present on Ala-2. The interaction with UBE2M N-terminus stretch occupies residues 53–70 (HPDFEPSTESLQFLLDTC). Residues 100-124 (DMDT…GRPK) and 148-171 (IQDF…SIIA) each bind ATP. Interaction with UBE2M N-terminus stretches follow at residues 157–161 (RQFHI) and 192–217 (PSSI…LPGM). Positions 227–229 (LYP) are interaction with NEDD8. The active-site Glycyl thioester intermediate is the Cys-237. Interaction with NAE1 regions lie at residues 242 to 248 (MPRLPEH) and 292 to 295 (YNIR). Positions 331-338 (IATSAYIP) are interaction with UBE2M N-terminus. Residues 352 to 357 (YTYTFE) are interaction with NEDD8. The segment at 368 to 462 (SQLPQNIQFS…QTVLFKLHFT (95 aa)) is interaction with UBE2M core domain.

The protein belongs to the ubiquitin-activating E1 family. UBA3 subfamily. As to quaternary structure, heterodimer of UBA3 and NAE1. Interacts with NEDD8, UBE2F and UBE2M. Binds ESR1 and ESR2 with bound steroid ligand. Interacts with TBATA.

The catalysed reaction is ATP + [NEDD8 protein] + [E1 NEDD8-activating enzyme]-L-cysteine = AMP + diphosphate + [E1 NEDD8-activating enzyme]-S-[NEDD8 protein]-yl-L-cysteine.. It participates in protein modification; protein neddylation. Its activity is regulated as follows. Binding of TP53BP2 to the regulatory subunit NAE1 decreases activity. Catalytic subunit of the dimeric UBA3-NAE1 E1 enzyme. E1 activates NEDD8 by first adenylating its C-terminal glycine residue with ATP, thereafter linking this residue to the side chain of the catalytic cysteine, yielding a NEDD8-UBA3 thioester and free AMP. E1 finally transfers NEDD8 to the catalytic cysteine of UBE2M. Down-regulates steroid receptor activity. Necessary for cell cycle progression. The protein is NEDD8-activating enzyme E1 catalytic subunit (Uba3) of Mus musculus (Mouse).